Consider the following 222-residue polypeptide: Probable fimbrial chaperone EcpB (222 aa).

The first 20 residues, 1-20 (MKKHLLPLALLFSGISPAQA), serve as a signal peptide directing secretion.

Belongs to the EcpB/EcpE family.

Functionally, part of the ecpRABCDE operon, which encodes the E.coli common pilus (ECP). ECP is found in both commensal and pathogenic strains and plays a dual role in early-stage biofilm development and host cell recognition. The protein is Probable fimbrial chaperone EcpB (ecpB) of Escherichia coli (strain K12).